Reading from the N-terminus, the 316-residue chain is Low affinity immunoglobulin gamma Fc region receptor II-a (316 aa).

The first 35 residues, 1–35 (MAMETQMSQNVCPRNLWLLQPLTVLLLLASADSQA), serve as a signal peptide directing secretion. Residues 36–216 (APPKAVLKLE…PSVGSSSPVG (181 aa)) are Extracellular-facing. 2 consecutive Ig-like C2-type domains span residues 38–117 (PKAV…VHLT) and 121–203 (EWLV…VTIT). 2 cysteine pairs are disulfide-bonded: cysteine 61–cysteine 103 and cysteine 142–cysteine 186. N-linked (GlcNAc...) asparagine glycans are attached at residues asparagine 96, asparagine 170, and asparagine 177. The helical transmembrane segment at 217–239 (IIVAVVIATAVAAIVAAVVALIY) threads the bilayer. Topologically, residues 240–316 (CRKKRISANS…PPNDHVNSNN (77 aa)) are cytoplasmic. Residues tyrosine 287 and tyrosine 303 each carry the phosphotyrosine; by SRC-type Tyr-kinases modification.

As to quaternary structure, interacts with INPP5D/SHIP1 and INPPL1/SHIP2, regulating its function. Interacts with APCS and FGR. Interacts with HCK. In terms of processing, phosphorylated by SRC-type Tyr-kinases such as HCK, LYN, BLK, FYN and SYK.

It localises to the cell membrane. Its function is as follows. Binds to the Fc region of immunoglobulins gamma. Low affinity receptor. By binding to IgG it initiates cellular responses against pathogens and soluble antigens. Promotes phagocytosis of opsonized antigens. The chain is Low affinity immunoglobulin gamma Fc region receptor II-a (FCGR2A) from Pan troglodytes (Chimpanzee).